Reading from the N-terminus, the 407-residue chain is Na(+)-translocating NADH-quinone reductase subunit F (407 aa).

A helical membrane pass occupies residues 3–23 (IILGVAMFTGIVMVLVLLILF). The 95-residue stretch at 32 to 126 (GDIAVEVNGD…NLKIELPEEI (95 aa)) folds into the 2Fe-2S ferredoxin-type domain. Residues Cys69, Cys75, Cys78, and Cys110 each coordinate [2Fe-2S] cluster. In terms of domain architecture, FAD-binding FR-type spans 129–269 (VKKWECEVIS…SGPFGEFFAK (141 aa)).

Belongs to the NqrF family. In terms of assembly, composed of six subunits; NqrA, NqrB, NqrC, NqrD, NqrE and NqrF. Requires [2Fe-2S] cluster as cofactor. FAD serves as cofactor.

It localises to the cell inner membrane. It carries out the reaction a ubiquinone + n Na(+)(in) + NADH + H(+) = a ubiquinol + n Na(+)(out) + NAD(+). Functionally, NQR complex catalyzes the reduction of ubiquinone-1 to ubiquinol by two successive reactions, coupled with the transport of Na(+) ions from the cytoplasm to the periplasm. The first step is catalyzed by NqrF, which accepts electrons from NADH and reduces ubiquinone-1 to ubisemiquinone by a one-electron transfer pathway. This Serratia proteamaculans (strain 568) protein is Na(+)-translocating NADH-quinone reductase subunit F.